The sequence spans 175 residues: Large ribosomal subunit protein eL14 (175 aa).

The tract at residues 150-175 (KAAKMDSTEGAKRRMQKAIAARKAKK) is disordered. A compositionally biased stretch (basic and acidic residues) spans 152–161 (AKMDSTEGAK). The span at 162-175 (RRMQKAIAARKAKK) shows a compositional bias: basic residues.

It belongs to the eukaryotic ribosomal protein eL14 family.

Component of the large ribosomal subunit. The ribosome is a large ribonucleoprotein complex responsible for the synthesis of proteins in the cell. The protein is Large ribosomal subunit protein eL14 (RPL14) of Leishmania donovani.